Here is a 315-residue protein sequence, read N- to C-terminus: Protein OPG185 (315 aa).

The first 16 residues, 1–16 (MTRLPILLLLISLVYA), serve as a signal peptide directing secretion. One can recognise an Ig-like V-type domain in the interval 17 to 121 (TPFPQTSKKI…NDTDKVDYEE (105 aa)). Topologically, residues 17 to 279 (TPFPQTSKKI…SNYKTKDFVE (263 aa)) are virion surface. The cysteines at positions 34 and 103 are disulfide-linked. N-linked (GlcNAc...) asparagine; by host glycans are attached at residues Asn37, Asn69, Asn112, and Asn161. Positions 194 to 213 (TVSATSGESTTDETPEPITD) are disordered. Asn254 carries N-linked (GlcNAc...) asparagine; by host glycosylation. Residues 280–303 (IFGITALIILSAVAIFCITYYICN) form a helical membrane-spanning segment. Over 304–315 (KRSRKYKTENKV) the chain is Intravirion.

Belongs to the orthopoxvirus OPG185 family. As to quaternary structure, heterodimerizes with OPG040. The heterodimer OPG185-OPG040 interacts with components of the entry fusion complex OPG143 and OPG094. Heterodimer with C3/VPC protein; disulfide-linked. Glycosylated; contains phosphate and sulfate-substituted glycans. O-glycosylation is required for hemagglutination and hemadsorption activities of infected cell membranes.

It is found in the virion membrane. Its subcellular location is the host membrane. Its function is as follows. Prevents cell to cell fusion by interacting with and directing the viral OPG040 protein on the host plasma membrane. The OPG185-OPG040 complex associates with components of the entry fusion complex (EFC) presumably to avoid superinfection and syncytium formation. Via its interaction with C3/VCP protein, protects the infected cell and probably also the extracellular enveloped virus from complement attack. The polypeptide is Protein OPG185 (OPG185) (Vaccinia virus (strain Copenhagen) (VACV)).